A 320-amino-acid chain; its full sequence is Chitinase 3 (320 aa).

A signal peptide spans 1–18 (MRALALAVVAMAVVAVRG). The Chitin-binding type-1 domain occupies 19–59 (EQCGSQAGGALCPNCLCCSQYGWCGSTSDYCGAGCQSQCSG). Intrachain disulfides connect cysteine 21/cysteine 36, cysteine 30/cysteine 42, cysteine 33/cysteine 61, cysteine 35/cysteine 49, cysteine 53/cysteine 57, cysteine 97/cysteine 159, cysteine 172/cysteine 180, and cysteine 279/cysteine 311. Glutamate 141 acts as the Proton donor in catalysis.

It belongs to the glycosyl hydrolase 19 family. Chitinase class I subfamily. As to expression, expressed at low levels in roots, leaves, sheaths and meristems.

It catalyses the reaction Random endo-hydrolysis of N-acetyl-beta-D-glucosaminide (1-&gt;4)-beta-linkages in chitin and chitodextrins.. Hydrolyzes chitin and plays a role in defense against fungal pathogens containing chitin. Inhibits the growth of T.reesei fungus on plate assay. This is Chitinase 3 (Cht3) from Oryza sativa subsp. japonica (Rice).